The primary structure comprises 506 residues: Epstein-Barr nuclear antigen leader protein (506 aa).

Disordered regions lie at residues 1–470 (MGDR…PRPP) and 485–506 (FEPP…EDED). Position 35 is a phosphoserine; by host (serine 35).

It belongs to the lymphocryptovirus EBNA-LP family. In terms of assembly, homooligomer. Interacts with host SP100; this interaction is important for EBNA-LP coactivator activity. Interacts with host HAX1, ERR1 and HSPA2. Interacts with host PRKDC and AKAP8L; these interactions modulate the coactivator function of EBNA-LP. Phosphorylated by the cellular protein kinase cdc2.

The protein localises to the host nucleus. Plays an important role in the establishment of B-cell immortalization by acting as an EBNA2 coactivator. This transcriptional activation preferentially enhances the expression of the major viral protein LMP1. The interaction between EBNA-LP and host SP100 correlates with coactivation of EBNA2 and the relocalization of SP100 from PML nuclear bodies into nucleoplasm. The protein is Epstein-Barr nuclear antigen leader protein (EBNA-LP) of Epstein-Barr virus (strain B95-8) (HHV-4).